The chain runs to 250 residues: Aliphatic sulfonates import ATP-binding protein SsuB 2 (250 aa).

An ABC transporter domain is found at 13-229 (VRLQGLTRSF…SYRDPLLGEY (217 aa)). 45–52 (GHSGSGKS) contributes to the ATP binding site.

The protein belongs to the ABC transporter superfamily. Aliphatic sulfonates importer (TC 3.A.1.17.2) family. In terms of assembly, the complex is composed of two ATP-binding proteins (SsuB), two transmembrane proteins (SsuC) and a solute-binding protein (SsuA).

It localises to the cell membrane. The catalysed reaction is ATP + H2O + aliphatic sulfonate-[sulfonate-binding protein]Side 1 = ADP + phosphate + aliphatic sulfonateSide 2 + [sulfonate-binding protein]Side 1.. In terms of biological role, part of the ABC transporter complex SsuABC involved in aliphatic sulfonates import. Responsible for energy coupling to the transport system. The protein is Aliphatic sulfonates import ATP-binding protein SsuB 2 of Streptomyces avermitilis (strain ATCC 31267 / DSM 46492 / JCM 5070 / NBRC 14893 / NCIMB 12804 / NRRL 8165 / MA-4680).